The chain runs to 210 residues: Pyridoxine/pyridoxamine 5'-phosphate oxidase (210 aa).

Substrate is bound by residues 7–10 (REDY) and lysine 65. Residues 60–65 (RMVLLK), 75–76 (FT), arginine 81, lysine 82, and glutamine 104 each bind FMN. Positions 122, 126, and 130 each coordinate substrate. FMN-binding positions include 139–140 (QS) and tryptophan 183. 189–191 (RLH) is a binding site for substrate. Arginine 193 lines the FMN pocket.

The protein belongs to the pyridoxamine 5'-phosphate oxidase family. As to quaternary structure, homodimer. The cofactor is FMN.

The catalysed reaction is pyridoxamine 5'-phosphate + O2 + H2O = pyridoxal 5'-phosphate + H2O2 + NH4(+). The enzyme catalyses pyridoxine 5'-phosphate + O2 = pyridoxal 5'-phosphate + H2O2. It participates in cofactor metabolism; pyridoxal 5'-phosphate salvage; pyridoxal 5'-phosphate from pyridoxamine 5'-phosphate: step 1/1. The protein operates within cofactor metabolism; pyridoxal 5'-phosphate salvage; pyridoxal 5'-phosphate from pyridoxine 5'-phosphate: step 1/1. In terms of biological role, catalyzes the oxidation of either pyridoxine 5'-phosphate (PNP) or pyridoxamine 5'-phosphate (PMP) into pyridoxal 5'-phosphate (PLP). This chain is Pyridoxine/pyridoxamine 5'-phosphate oxidase, found in Neisseria meningitidis serogroup A / serotype 4A (strain DSM 15465 / Z2491).